Reading from the N-terminus, the 220-residue chain is Deoxyribose-phosphate aldolase (220 aa).

The Proton donor/acceptor role is filled by aspartate 89. Residue lysine 150 is the Schiff-base intermediate with acetaldehyde of the active site. The Proton donor/acceptor role is filled by lysine 182.

The protein belongs to the DeoC/FbaB aldolase family. DeoC type 1 subfamily.

It localises to the cytoplasm. It catalyses the reaction 2-deoxy-D-ribose 5-phosphate = D-glyceraldehyde 3-phosphate + acetaldehyde. Its pathway is carbohydrate degradation; 2-deoxy-D-ribose 1-phosphate degradation; D-glyceraldehyde 3-phosphate and acetaldehyde from 2-deoxy-alpha-D-ribose 1-phosphate: step 2/2. In terms of biological role, catalyzes a reversible aldol reaction between acetaldehyde and D-glyceraldehyde 3-phosphate to generate 2-deoxy-D-ribose 5-phosphate. The protein is Deoxyribose-phosphate aldolase of Mycoplasmoides pirum (Mycoplasma pirum).